A 245-amino-acid chain; its full sequence is Ribonuclease PH (245 aa).

Residues R87 and 125–127 (GTR) contribute to the phosphate site.

The protein belongs to the RNase PH family. As to quaternary structure, homohexameric ring arranged as a trimer of dimers.

The catalysed reaction is tRNA(n+1) + phosphate = tRNA(n) + a ribonucleoside 5'-diphosphate. Its function is as follows. Phosphorolytic 3'-5' exoribonuclease that plays an important role in tRNA 3'-end maturation. Removes nucleotide residues following the 3'-CCA terminus of tRNAs; can also add nucleotides to the ends of RNA molecules by using nucleoside diphosphates as substrates, but this may not be physiologically important. Probably plays a role in initiation of 16S rRNA degradation (leading to ribosome degradation) during starvation. The polypeptide is Ribonuclease PH (Streptomyces coelicolor (strain ATCC BAA-471 / A3(2) / M145)).